The sequence spans 328 residues: Beta-ribofuranosylphenol 5'-phosphate synthase (328 aa).

Belongs to the beta-RFA-P synthase family. Homodimer. Mg(2+) is required as a cofactor.

The enzyme catalyses 5-phospho-alpha-D-ribose 1-diphosphate + 4-hydroxybenzoate + H(+) = 4-(beta-D-ribofuranosyl)phenol 5'-phosphate + CO2 + diphosphate. It catalyses the reaction 4-aminobenzoate + 5-phospho-alpha-D-ribose 1-diphosphate + H(+) = 4-(beta-D-ribofuranosyl)aminobenzene 5'-phosphate + CO2 + diphosphate. It participates in cofactor biosynthesis; 5,6,7,8-tetrahydromethanopterin biosynthesis. In terms of biological role, catalyzes the condensation of 4-hydroxybenzoate (HB) with 5-phospho-alpha-D-ribose 1-diphosphate (PRPP) to produce beta-ribofuranosylphenol 5'-phosphate (beta-RFH-P). Also catalyzes the condensation of 4-aminobenzoate (pABA) with PRPP to produce beta-ribofuranosylaminobenzene 5'-phosphate (beta-RFA-P). Only 4-hydroxybenzoate is known to be biosynthesized by methanogenic archaea, but 4-aminobenzoate can be used as substrate by growing methanogens when it is present in the growth medium. In Methanocaldococcus jannaschii (strain ATCC 43067 / DSM 2661 / JAL-1 / JCM 10045 / NBRC 100440) (Methanococcus jannaschii), this protein is Beta-ribofuranosylphenol 5'-phosphate synthase.